Consider the following 435-residue polypeptide: Eukaryotic peptide chain release factor subunit 1-3 (435 aa).

Residue alanine 2 is modified to N-acetylalanine.

The protein belongs to the eukaryotic release factor 1 family. In terms of assembly, heterodimer of two subunits, one of which binds GTP.

The protein localises to the cytoplasm. Directs the termination of nascent peptide synthesis (translation) in response to the termination codons UAA, UAG and UGA. Modulates plant growth and development. The polypeptide is Eukaryotic peptide chain release factor subunit 1-3 (ERF1-3) (Arabidopsis thaliana (Mouse-ear cress)).